Consider the following 309-residue polypeptide: Tagatose-6-phosphate kinase (309 aa).

It belongs to the carbohydrate kinase PfkB family. LacC subfamily.

It catalyses the reaction D-tagatofuranose 6-phosphate + ATP = D-tagatofuranose 1,6-bisphosphate + ADP + H(+). Its pathway is carbohydrate metabolism; D-tagatose 6-phosphate degradation; D-glyceraldehyde 3-phosphate and glycerone phosphate from D-tagatose 6-phosphate: step 1/2. The polypeptide is Tagatose-6-phosphate kinase (Streptococcus pneumoniae (strain P1031)).